The following is a 557-amino-acid chain: Copine-6 (557 aa).

C2 domains lie at Met-1–Leu-127 and Thr-134–Asp-263. Positions 167, 173, 229, 231, and 237 each coordinate Ca(2+). The tract at residues Ser-244 to Cys-303 is linker region. Positions Ser-306–Val-526 constitute a VWFA domain.

The protein belongs to the copine family. In terms of assembly, interacts (via second C2 domain) with OS9 (via C-terminus); this interaction occurs in a calcium-dependent manner in vitro. May interact with NECAB1. Requires Ca(2+) as cofactor. As to expression, expressed in the brain. Expressed in pyramidal cells, granule cells, and neurons in the dentate gyrus of the hippocampus and in granule cells of the olfactory bulb (at protein level). Expressed in pyramidal cells of the CA1-CA3 regions, in granule cells of the dentate gyrus, in granule cells of the olfactory bulbs, in the mitral cell layer and in neurons of the cerebral cortex layer II, brainstem and spinal cord. Not detected in glial cells.

The protein localises to the cytoplasm. The protein resides in the cell membrane. It is found in the endosome. Its subcellular location is the cytoplasmic vesicle. It localises to the clathrin-coated vesicle. The protein localises to the perikaryon. The protein resides in the cell projection. It is found in the dendrite. Its function is as follows. Calcium-dependent phospholipid-binding protein that plays a role in calcium-mediated intracellular processes. Binds phospholipid membranes in a calcium-dependent manner. Plays a role in dendrite formation by melanocytes. The sequence is that of Copine-6 from Mus musculus (Mouse).